Consider the following 92-residue polypeptide: Small ribosomal subunit protein uS19 (92 aa).

The protein belongs to the universal ribosomal protein uS19 family.

Its function is as follows. Protein S19 forms a complex with S13 that binds strongly to the 16S ribosomal RNA. The polypeptide is Small ribosomal subunit protein uS19 (Lysinibacillus sphaericus (strain C3-41)).